Here is a 292-residue protein sequence, read N- to C-terminus: MFKKYIFILLLLVTSIVKAENIEVNNLDKIKQDFEENYIKNYLPQDLLVVIDLDKILFKPLLSLGEQIDKDVYAKLAPTLQKISKNPKNIYIDQLILTSDKYKKELLDSNFPNFVSDIRNKNIPIIAVNGGFTGNFNNIPKFEIWIADYLKKNFNIDFSNSFPKNNYIIFNNLKSFSNTYPVFYKGILTSNNISGAELMINFFVQMNFMPKVLIMVSGSTELLSSMEAQLANYSSSVLFIGYYYNNQDSRDNNANYNVIINDLTNQMNNIKRNNPPLKTNNAKSKNPYDQSK.

A signal peptide spans 1-19 (MFKKYIFILLLLVTSIVKA). The disordered stretch occupies residues 271–292 (KRNNPPLKTNNAKSKNPYDQSK).

This is an uncharacterized protein from Rickettsia bellii (strain RML369-C).